Consider the following 329-residue polypeptide: G-protein coupled bile acid receptor 1 (329 aa).

Over 1–15 the chain is Extracellular; it reads MMTPNSTELSAIPMG. Asparagine 5 is a glycosylation site (N-linked (GlcNAc...) asparagine). Residues 16-36 traverse the membrane as a helical segment; that stretch reads VLGLSLALASLIVIANLLLAL. At 37–49 the chain is on the cytoplasmic side; that stretch reads GIALDRHLRSPPA. The chain crosses the membrane as a helical span at residues 50-70; that stretch reads GCFFLSLLLAGLLTGLALPML. The Extracellular portion of the chain corresponds to 71–84; it reads PGLWSRNHQGYWSC. A disulfide bond links cysteine 84 and cysteine 154. A helical membrane pass occupies residues 85–105; that stretch reads LLLHLTPNFCFLSLLANLLLV. The Cytoplasmic portion of the chain corresponds to 106–124; the sequence is HGERYMAVLQPLRPHGSVR. A helical membrane pass occupies residues 125–145; it reads LALFLTWVSSLFFASLPALGW. Over 146-164 the chain is Extracellular; the sequence is NHWSPDANCSSQAVFPAPY. Asparagine 153 is a glycosylation site (N-linked (GlcNAc...) asparagine). The helical transmembrane segment at 165 to 185 threads the bilayer; it reads LYLEVYGLLLPAVGATALLSV. The Cytoplasmic portion of the chain corresponds to 186 to 229; it reads RVLATAHRQLCEIRRLERAVCRDVPSTLARALTWRQARAQAGAT. Residues 230 to 250 form a helical membrane-spanning segment; sequence LLFLLCWGPYVATLLLSVLAY. Residues 251-260 are Extracellular-facing; the sequence is ERRPPLGPGT. The helical transmembrane segment at 261–281 threads the bilayer; the sequence is LLSLISLGSTSAAAVPVAMGL. Topologically, residues 282-329 are cytoplasmic; the sequence is GDQRYTAPWRTAAQRCLRVLRGRAKRDNPGPSTAYHTSSQCSIDLDLN.

The protein belongs to the G-protein coupled receptor 1 family.

Its subcellular location is the cell membrane. Its function is as follows. Receptor for bile acid. Bile acid-binding induces its internalization, activation of extracellular signal-regulated kinase and intracellular cAMP production. May be involved in the suppression of macrophage functions by bile acids. Involved in bile acid promoted GLP1R secretion. The polypeptide is G-protein coupled bile acid receptor 1 (Gpbar1) (Mus musculus (Mouse)).